The sequence spans 288 residues: ATP synthase gamma chain (288 aa).

It belongs to the ATPase gamma chain family. As to quaternary structure, F-type ATPases have 2 components, CF(1) - the catalytic core - and CF(0) - the membrane proton channel. CF(1) has five subunits: alpha(3), beta(3), gamma(1), delta(1), epsilon(1). CF(0) has three main subunits: a, b and c.

It localises to the cell inner membrane. Produces ATP from ADP in the presence of a proton gradient across the membrane. The gamma chain is believed to be important in regulating ATPase activity and the flow of protons through the CF(0) complex. The protein is ATP synthase gamma chain of Stutzerimonas stutzeri (strain A1501) (Pseudomonas stutzeri).